A 174-amino-acid polypeptide reads, in one-letter code: Peptidyl-prolyl cis-trans isomerase D, mitochondrial (174 aa).

A PPIase cyclophilin-type domain is found at 10-173 (FFQIKQGNTP…AACVIEDCGQ (164 aa)).

This sequence belongs to the cyclophilin-type PPIase family. PPIase D subfamily.

It localises to the mitochondrion. The enzyme catalyses [protein]-peptidylproline (omega=180) = [protein]-peptidylproline (omega=0). Binds cyclosporin A (CsA). CsA mediates some of its effects via an inhibitory action on PPIase. Its function is as follows. PPIases accelerate the folding of proteins. It catalyzes the cis-trans isomerization of proline imidic peptide bonds in oligopeptides. The sequence is that of Peptidyl-prolyl cis-trans isomerase D, mitochondrial (cypD) from Dictyostelium discoideum (Social amoeba).